A 335-amino-acid chain; its full sequence is Probable nicotianamine synthase 2 (335 aa).

This sequence belongs to the nicotianamine synthase (NAS)-like family.

The enzyme catalyses 3 S-adenosyl-L-methionine = nicotianamine + 3 S-methyl-5'-thioadenosine + 3 H(+). Its function is as follows. Synthesizes nicotianamine, a polyamine that is the first intermediate in the synthesis of the phytosiderophores of the mugineic acid type found in gramineae which serves as a sensor for the physiological iron status within the plant, and/or might be involved in the transport of iron. The sequence is that of Probable nicotianamine synthase 2 (NAS2) from Hordeum vulgare (Barley).